We begin with the raw amino-acid sequence, 238 residues long: 15,16-dihydrobiliverdin:ferredoxin oxidoreductase (238 aa).

The protein belongs to the HY2 family.

It carries out the reaction 15,16-dihydrobiliverdin + oxidized 2[4Fe-4S]-[ferredoxin] = biliverdin IXalpha + reduced 2[4Fe-4S]-[ferredoxin] + 2 H(+). Catalyzes the two-electron reduction of biliverdin IX-alpha at the C15 methine bridge. This chain is 15,16-dihydrobiliverdin:ferredoxin oxidoreductase, found in Prochlorococcus marinus (strain NATL2A).